The sequence spans 296 residues: NAD kinase (296 aa).

The active-site Proton acceptor is Asp-72. NAD(+) contacts are provided by residues 72-73 (DG), 146-147 (ND), Arg-157, Lys-174, Asp-176, 187-192 (TAYALS), and Gln-247.

The protein belongs to the NAD kinase family. Requires a divalent metal cation as cofactor.

The protein localises to the cytoplasm. It carries out the reaction NAD(+) + ATP = ADP + NADP(+) + H(+). Involved in the regulation of the intracellular balance of NAD and NADP, and is a key enzyme in the biosynthesis of NADP. Catalyzes specifically the phosphorylation on 2'-hydroxyl of the adenosine moiety of NAD to yield NADP. The protein is NAD kinase of Pseudomonas savastanoi pv. phaseolicola (strain 1448A / Race 6) (Pseudomonas syringae pv. phaseolicola (strain 1448A / Race 6)).